Reading from the N-terminus, the 242-residue chain is Ras-like protein family member 11A (242 aa).

The segment at 17-241 (ESSSDYLLPK…SSKAKAASTL (225 aa)) is small GTPase-like. GTP is bound by residues 34-41 (GASCVGKS), 81-85 (DTPGG), and 147-150 (NKGD).

It belongs to the small GTPase superfamily. Ras family. Interacts with UBF/UBTF.

Its subcellular location is the nucleus. It is found in the nucleolus. It carries out the reaction GTP + H2O = GDP + phosphate + H(+). Its function is as follows. Regulator of rDNA transcription. Acts in cooperation UBF/UBTF and positively regulates RNA polymerase I transcription. The protein is Ras-like protein family member 11A of Rattus norvegicus (Rat).